The primary structure comprises 661 residues: Kyphoscoliosis peptidase (661 aa).

Residues 28–41 (GTLSDQQANPSSLL) show a composition bias toward polar residues. Disordered regions lie at residues 28–47 (GTLSDQQANPSSLLQRGGGF) and 115–136 (QGDKNGNTRPRQPGGKDAHAYP). Catalysis depends on residues C225, H267, and D282.

This sequence belongs to the transglutaminase-like superfamily. In terms of assembly, interacts with IGFN1 and FLNC. In terms of tissue distribution, highly expressed in skeletal muscle.

It is found in the cytoplasm. The protein resides in the cytoskeleton. Its subcellular location is the myofibril. The protein localises to the sarcomere. It localises to the z line. Probable cytoskeleton-associated protease required for normal muscle growth. Involved in function, maturation and stabilization of the neuromuscular junction. May act by cleaving muscle-specific proteins such as FLNC. The chain is Kyphoscoliosis peptidase from Homo sapiens (Human).